Reading from the N-terminus, the 281-residue chain is Glutamate racemase (281 aa).

Substrate contacts are provided by residues aspartate 10 to serine 11 and tyrosine 42 to glycine 43. Cysteine 74 acts as the Proton donor/acceptor in catalysis. Asparagine 75–threonine 76 serves as a coordination point for substrate. Cysteine 190 serves as the catalytic Proton donor/acceptor. Threonine 191–histidine 192 provides a ligand contact to substrate.

The protein belongs to the aspartate/glutamate racemases family.

The enzyme catalyses L-glutamate = D-glutamate. It functions in the pathway cell wall biogenesis; peptidoglycan biosynthesis. Functionally, provides the (R)-glutamate required for cell wall biosynthesis. The chain is Glutamate racemase from Oenococcus oeni (strain ATCC BAA-331 / PSU-1).